The chain runs to 105 residues: Thioredoxin (105 aa).

A Thioredoxin domain is found at 1–105 (MFELDKDTFE…NVEAMVKKYI (105 aa)). Cys-29 and Cys-32 are disulfide-bonded.

The protein belongs to the thioredoxin family.

In terms of biological role, participates in various redox reactions through the reversible oxidation of its active center dithiol to a disulfide and catalyzes dithiol-disulfide exchange reactions. This chain is Thioredoxin (trxA), found in Acetoanaerobium sticklandii (strain ATCC 12662 / DSM 519 / JCM 1433 / CCUG 9281 / NCIMB 10654 / HF) (Clostridium sticklandii).